Here is a 1003-residue protein sequence, read N- to C-terminus: Glycine--tRNA ligase (1003 aa).

The interval 1–310 (MSSQPLTLQD…VTAKQIPHIC (310 aa)) is glycine--tRNA ligase alpha subunit. Positions 311–1003 (QDEDFLLEIG…CFGFYAWDAL (693 aa)) are glycine--tRNA ligase beta subunit.

The protein belongs to the class-II aminoacyl-tRNA synthetase family.

The protein localises to the cytoplasm. The catalysed reaction is tRNA(Gly) + glycine + ATP = glycyl-tRNA(Gly) + AMP + diphosphate. The sequence is that of Glycine--tRNA ligase (glyQS) from Chlamydia muridarum (strain MoPn / Nigg).